Reading from the N-terminus, the 237-residue chain is tRNA (guanine-N(7)-)-methyltransferase (237 aa).

S-adenosyl-L-methionine-binding residues include E67, E92, D119, and D141. D141 is a catalytic residue. Substrate-binding positions include K145, D177, and 214-217; that span reads TRYE.

Belongs to the class I-like SAM-binding methyltransferase superfamily. TrmB family.

It carries out the reaction guanosine(46) in tRNA + S-adenosyl-L-methionine = N(7)-methylguanosine(46) in tRNA + S-adenosyl-L-homocysteine. Its pathway is tRNA modification; N(7)-methylguanine-tRNA biosynthesis. Catalyzes the formation of N(7)-methylguanine at position 46 (m7G46) in tRNA. This Ruegeria pomeroyi (strain ATCC 700808 / DSM 15171 / DSS-3) (Silicibacter pomeroyi) protein is tRNA (guanine-N(7)-)-methyltransferase.